The sequence spans 133 residues: MCAKSLLLVFGILLGLSHLSLSQNWATFQQKHIINTPIINCNTIMDNNIYIVGGQCKRVNTFIISSATTVKAICTGVINMNVLSTTRFQLNTCTRTSITPRPCPYSSRTETNYICVKCENQYPVHFAGIGRCP.

An N-terminal signal peptide occupies residues 1–22; sequence MCAKSLLLVFGILLGLSHLSLS. Q23 is modified (pyrrolidone carboxylic acid). The Proton acceptor role is filled by H32. Disulfide bonds link C41-C93, C56-C103, C74-C118, and C115-C132. 57-61 is a substrate binding site; that stretch reads KRVNT. The Proton donor role is filled by H125.

Belongs to the pancreatic ribonuclease family. As to quaternary structure, monomer.

The protein resides in the secreted. In terms of biological role, preferentially cleaves single-stranded RNA at pyrimidine residues with a 3'flanking guanine. Hydrolyzes poly(U) and poly(C) as substrates, and prefers the former. The S-lectins in frog eggs may be involved in the fertilization and development of the frog embryo. This lectin agglutinates various animal cells, including normal lymphocytes, erythrocytes, and fibroblasts of animal and human origin. It is cytotoxic against several tumor cells. In Aquarana catesbeiana (American bullfrog), this protein is Oocytes ribonuclease (RCR).